A 466-amino-acid polypeptide reads, in one-letter code: MGPTSRNHKSSQKDVAPNEAKPPRYPQRNRSITASASASAFASPAVANSRVAKERPSSSTAGEGEPQETVLKLPSIPTLPARMAKLVPLEGLGCEAAVGSLTPSREREYKVTNKHTEGRRPVYAIVFNFLDVRYYDIFATACGPRLSTYRCLMNGKFALLQSYLDDDMNESFFTVSWACDIDGNPLLVAAGSTGIIRVINCATEKIYKSLVGHGGSVNEIKSQPSNPSLIISASKDESIKLWNVQTGILILVFGGVGGHRHEVLGVDFHTSDIYRFLSCGMDNTVRIWSMKEFWEYVEKSYSWTDATSKFPTKFVQFPVLCAEIHSNYVDCTKWLGDFVLSKSVENEILLWESITKEENPGEGHIDVLQKYPVPECNIWFMKFSCDFHHNQLAIGNRDGKVYVWKVQTSPPVLIARLNNPQVKSAIRQTAVSFDGSTILACTEDGNIWRWDEVDHPTAPVPSKKQK.

A compositionally biased stretch (basic residues) spans 1-10 (MGPTSRNHKS). The interval 1 to 71 (MGPTSRNHKS…GEGEPQETVL (71 aa)) is disordered. Over residues 31-49 (SITASASASAFASPAVANS) the composition is skewed to low complexity. 6 WD repeats span residues 167 to 209 (DMNE…IYKS), 212 to 252 (GHGG…LILV), 258 to 298 (GHRH…EYVE), 324 to 361 (IHSN…ENPG), 374 to 414 (PECN…PVLI), and 421 to 460 (QVKS…TAPV).

The protein belongs to the WD repeat ESC family. Interacts with EZ1 and CLF. Component of the polycomb repressive complex 2 (PRC2), which methylates 'Lys-27' residues of histone H3 (H3K27me3), leading to transcriptional repression of the affected target gene. Expressed specifically in seed endosperm.

Its function is as follows. Polycomb group (PcG) protein. PcG proteins act by forming multiprotein complexes, which are required to maintain the transcriptionally repressive state of homeotic genes throughout development. PcG proteins are not required to initiate repression, but to maintain it during later stages of development. They act via the methylation of histones, rendering chromatin heritably changed in its expressibility. Together with EZ1 and CLF forms a complex that is involved in gene transcriptional repression by trimethylation on histone H3 'Lys-27' (H3K27me3) of target genes. Involved in the regulation of embryo and seed endosperm development. FIE1-containing PcG complex in seed endosperm regulates the expression of various transcription factors by trimethylation on histone H3 'Lys-27' (H3K27me3) of target genes. Involved in the overall expression regulation of nutrient metabolism genes, such as prolamin synthesis and seed storage protein synthesis genes. Can regulate valine, leucine and isoleucine metabolism-related genes. The polypeptide is Polycomb group protein FIE1 (Oryza sativa subsp. japonica (Rice)).